We begin with the raw amino-acid sequence, 389 residues long: 3-ketoacyl-CoA thiolase (389 aa).

Cys-91 (acyl-thioester intermediate) is an active-site residue. Catalysis depends on proton acceptor residues His-343 and Cys-373.

It belongs to the thiolase-like superfamily. Thiolase family. Heterotetramer of two alpha chains (FadB) and two beta chains (FadA).

It is found in the cytoplasm. It carries out the reaction an acyl-CoA + acetyl-CoA = a 3-oxoacyl-CoA + CoA. The protein operates within lipid metabolism; fatty acid beta-oxidation. In terms of biological role, catalyzes the final step of fatty acid oxidation in which acetyl-CoA is released and the CoA ester of a fatty acid two carbons shorter is formed. This is 3-ketoacyl-CoA thiolase from Citrobacter koseri (strain ATCC BAA-895 / CDC 4225-83 / SGSC4696).